A 309-amino-acid polypeptide reads, in one-letter code: 4-hydroxy-3-methylbut-2-enyl diphosphate reductase (309 aa).

Residue Cys12 coordinates [4Fe-4S] cluster. Residues His41 and His74 each coordinate (2E)-4-hydroxy-3-methylbut-2-enyl diphosphate. His41 and His74 together coordinate dimethylallyl diphosphate. Isopentenyl diphosphate is bound by residues His41 and His74. Residue Cys96 coordinates [4Fe-4S] cluster. A (2E)-4-hydroxy-3-methylbut-2-enyl diphosphate-binding site is contributed by His124. His124 is a binding site for dimethylallyl diphosphate. Residue His124 coordinates isopentenyl diphosphate. The active-site Proton donor is Glu126. Thr167 serves as a coordination point for (2E)-4-hydroxy-3-methylbut-2-enyl diphosphate. A [4Fe-4S] cluster-binding site is contributed by Cys197. 4 residues coordinate (2E)-4-hydroxy-3-methylbut-2-enyl diphosphate: Ser225, Ser226, Asn227, and Ser269. Residues Ser225, Ser226, Asn227, and Ser269 each coordinate dimethylallyl diphosphate. Ser225, Ser226, Asn227, and Ser269 together coordinate isopentenyl diphosphate.

The protein belongs to the IspH family. [4Fe-4S] cluster is required as a cofactor.

The catalysed reaction is isopentenyl diphosphate + 2 oxidized [2Fe-2S]-[ferredoxin] + H2O = (2E)-4-hydroxy-3-methylbut-2-enyl diphosphate + 2 reduced [2Fe-2S]-[ferredoxin] + 2 H(+). It carries out the reaction dimethylallyl diphosphate + 2 oxidized [2Fe-2S]-[ferredoxin] + H2O = (2E)-4-hydroxy-3-methylbut-2-enyl diphosphate + 2 reduced [2Fe-2S]-[ferredoxin] + 2 H(+). It participates in isoprenoid biosynthesis; dimethylallyl diphosphate biosynthesis; dimethylallyl diphosphate from (2E)-4-hydroxy-3-methylbutenyl diphosphate: step 1/1. The protein operates within isoprenoid biosynthesis; isopentenyl diphosphate biosynthesis via DXP pathway; isopentenyl diphosphate from 1-deoxy-D-xylulose 5-phosphate: step 6/6. Its function is as follows. Catalyzes the conversion of 1-hydroxy-2-methyl-2-(E)-butenyl 4-diphosphate (HMBPP) into a mixture of isopentenyl diphosphate (IPP) and dimethylallyl diphosphate (DMAPP). Acts in the terminal step of the DOXP/MEP pathway for isoprenoid precursor biosynthesis. In Pseudoalteromonas translucida (strain TAC 125), this protein is 4-hydroxy-3-methylbut-2-enyl diphosphate reductase.